Here is a 460-residue protein sequence, read N- to C-terminus: Omega-3 fatty acid desaturase, chloroplastic (460 aa).

Positions 177 to 181 match the Histidine box-1 motif; it reads HDCGH. The Histidine box-2 motif lies at 213–217; sequence HRTHH. Residues 380-384 carry the Histidine box-3 motif; the sequence is HVIHH.

Belongs to the fatty acid desaturase type 1 family.

It is found in the plastid. Its subcellular location is the chloroplast membrane. It functions in the pathway lipid metabolism; polyunsaturated fatty acid biosynthesis. Functionally, chloroplast omega-3 fatty acid desaturase introduces the third double bond in the biosynthesis of 16:3 and 18:3 fatty acids, important constituents of plant membranes. It is thought to use ferredoxin as an electron donor and to act on fatty acids esterified to galactolipids, sulfolipids and phosphatidylglycerol. The chain is Omega-3 fatty acid desaturase, chloroplastic (FAD7A-1) from Ricinus communis (Castor bean).